A 185-amino-acid polypeptide reads, in one-letter code: A-type ATP synthase subunit E (185 aa).

The protein belongs to the V-ATPase E subunit family. In terms of assembly, has multiple subunits with at least A(3), B(3), C, D, E, F, H, I and proteolipid K(x).

It localises to the cell membrane. Its function is as follows. Component of the A-type ATP synthase that produces ATP from ADP in the presence of a proton gradient across the membrane. The sequence is that of A-type ATP synthase subunit E from Thermoplasma volcanium (strain ATCC 51530 / DSM 4299 / JCM 9571 / NBRC 15438 / GSS1).